The following is a 426-amino-acid chain: Testicular acid phosphatase (426 aa).

The N-terminal stretch at M1–A26 is a signal peptide. Over L27–P393 the chain is Extracellular. The Nucleophile role is filled by H41. Intrachain disulfides connect C159–C378, C214–C312, and C353–C357. N-linked (GlcNAc...) asparagine glycans are attached at residues N191 and N269. The active-site Proton donor is the D289. 2 N-linked (GlcNAc...) asparagine glycosylation sites follow: N330 and N339. The helical transmembrane segment at L394–W414 threads the bilayer. The Cytoplasmic segment spans residues R415 to V426.

This sequence belongs to the histidine acid phosphatase family. As to quaternary structure, homodimer. Post-translationally, glycosylated. Expressed mainly in the testis. Also expressed in the brain where they are enriched at the postsynaptic sites. Expressed at lower levels in the trachea, prostate, bone marrow, spinal cord, colon, fetal brain, heart, thymus, fetal liver, spleen, leukocytes, ovary, small intestine, pancreas and skeletal muscle. Expression is significantly lower in testicular cancer tissues than in normal testicular tissues. Isoform 3 is expressed in the testis, trachea, prostate and bone marrow.

It is found in the membrane. The enzyme catalyses a phosphate monoester + H2O = an alcohol + phosphate. May dephosphorylate receptor tyrosine-protein kinase ERBB4 and inhibits its ligand-induced proteolytic cleavage. May play a role in odontogenesis. The protein is Testicular acid phosphatase of Homo sapiens (Human).